Consider the following 355-residue polypeptide: Elongation factor Ts (355 aa).

An involved in Mg(2+) ion dislocation from EF-Tu region spans residues 82 to 85 (TDFV).

The protein belongs to the EF-Ts family.

The protein localises to the cytoplasm. Associates with the EF-Tu.GDP complex and induces the exchange of GDP to GTP. It remains bound to the aminoacyl-tRNA.EF-Tu.GTP complex up to the GTP hydrolysis stage on the ribosome. The chain is Elongation factor Ts (tsf) from Helicobacter pylori (strain ATCC 700392 / 26695) (Campylobacter pylori).